The primary structure comprises 213 residues: Alkylbase DNA glycosidase-like protein mag2 (213 aa).

DNA contacts are provided by lysine 53, leucine 54, serine 61, histidine 91, glycine 94, serine 96, lysine 97, lysine 99, glutamate 102, lysine 137, glycine 138, lysine 140, threonine 143, serine 163, and threonine 164.

The protein belongs to the alkylbase DNA glycosidase AlkA family.

The protein resides in the nucleus. Its function is as follows. Alkylbase DNA glycosidase-like protein that shows no DNA glycosylase activity for alkylated bases. The molecular role of mag2 appears to be abasic (AP) site recognition and protection, while possibly facilitating damage signaling by structurally sculpting the DNA substrate. Stimulates AP site binding to mismatch repair protein mutS. This is Alkylbase DNA glycosidase-like protein mag2 from Schizosaccharomyces pombe (strain 972 / ATCC 24843) (Fission yeast).